Reading from the N-terminus, the 197-residue chain is Imidazoleglycerol-phosphate dehydratase (197 aa).

This sequence belongs to the imidazoleglycerol-phosphate dehydratase family.

Its subcellular location is the cytoplasm. The enzyme catalyses D-erythro-1-(imidazol-4-yl)glycerol 3-phosphate = 3-(imidazol-4-yl)-2-oxopropyl phosphate + H2O. It participates in amino-acid biosynthesis; L-histidine biosynthesis; L-histidine from 5-phospho-alpha-D-ribose 1-diphosphate: step 6/9. This is Imidazoleglycerol-phosphate dehydratase from Cellvibrio japonicus (strain Ueda107) (Pseudomonas fluorescens subsp. cellulosa).